The chain runs to 303 residues: UDP-3-O-acyl-N-acetylglucosamine deacetylase (303 aa).

Zn(2+) contacts are provided by H78, H237, and D241. The active-site Proton donor is the H264.

It belongs to the LpxC family. Zn(2+) serves as cofactor.

It carries out the reaction a UDP-3-O-[(3R)-3-hydroxyacyl]-N-acetyl-alpha-D-glucosamine + H2O = a UDP-3-O-[(3R)-3-hydroxyacyl]-alpha-D-glucosamine + acetate. Its pathway is glycolipid biosynthesis; lipid IV(A) biosynthesis; lipid IV(A) from (3R)-3-hydroxytetradecanoyl-[acyl-carrier-protein] and UDP-N-acetyl-alpha-D-glucosamine: step 2/6. Catalyzes the hydrolysis of UDP-3-O-myristoyl-N-acetylglucosamine to form UDP-3-O-myristoylglucosamine and acetate, the committed step in lipid A biosynthesis. This is UDP-3-O-acyl-N-acetylglucosamine deacetylase from Xanthomonas oryzae pv. oryzae (strain MAFF 311018).